The chain runs to 198 residues: MAEVRARVDFKVGAKSNIDAEILSFRGLKTDKEHVAVIFKSADVTQEVPLVRMHSECLTGDVFHSSRCDCGEQLEETINRMGESGGIILYLRQEGRGIGLYNKIDAYRLQSEGMNTYEANNHLGFDDDLRDFTEAAQMLEALGIKQIRLVTNNPKKIRELSEYGIEIVEVVNTSAHIKEGNESYLKAKVSHGKHHLKV.

GTP is bound at residue 52–56 (RMHSE). Cys-57, Cys-68, and Cys-70 together coordinate Zn(2+). GTP-binding positions include Gln-73, 94 to 96 (EGR), and Thr-116. The active-site Proton acceptor is the Asp-128. The Nucleophile role is filled by Arg-130. GTP-binding residues include Thr-151 and Lys-156.

This sequence belongs to the GTP cyclohydrolase II family. Requires Zn(2+) as cofactor.

The catalysed reaction is GTP + 4 H2O = 2,5-diamino-6-hydroxy-4-(5-phosphoribosylamino)-pyrimidine + formate + 2 phosphate + 3 H(+). It participates in cofactor biosynthesis; riboflavin biosynthesis; 5-amino-6-(D-ribitylamino)uracil from GTP: step 1/4. Catalyzes the conversion of GTP to 2,5-diamino-6-ribosylamino-4(3H)-pyrimidinone 5'-phosphate (DARP), formate and pyrophosphate. In Vibrio vulnificus (strain CMCP6), this protein is GTP cyclohydrolase-2.